A 573-amino-acid polypeptide reads, in one-letter code: 3-oxosteroid 1-dehydrogenase (573 aa).

7–36 (DLIVVGSGAGACWAPIRAQEQGLKTLVVEK) is a binding site for FAD.

The protein belongs to the FAD-dependent oxidoreductase 2 family. 3-oxosteroid dehydrogenase subfamily. The cofactor is FAD.

The protein localises to the cell inner membrane. It catalyses the reaction a 3-oxosteroid + A = a 3-oxo-Delta(1)-steroid + AH2. The protein operates within lipid metabolism; steroid degradation. Dehydrogenates steroids by introducing a double bond in steroid ring A. In Comamonas testosteroni (Pseudomonas testosteroni), this protein is 3-oxosteroid 1-dehydrogenase.